The primary structure comprises 253 residues: Ribulose bisphosphate carboxylase large chain (253 aa).

Positions 35 and 85 each coordinate substrate. Catalysis depends on Lys87, which acts as the Proton acceptor. Lys89 is a binding site for substrate. Residues Lys113, Asp115, and Glu116 each coordinate Mg(2+). N6-carboxylysine is present on Lys113. His206 (proton acceptor) is an active-site residue. Arg207 and His239 together coordinate substrate.

This sequence belongs to the RuBisCO large chain family. Type I subfamily. In terms of assembly, heterohexadecamer of 8 large chains and 8 small chains; disulfide-linked. The disulfide link is formed within the large subunit homodimers. Requires Mg(2+) as cofactor. The disulfide bond which can form in the large chain dimeric partners within the hexadecamer appears to be associated with oxidative stress and protein turnover.

It localises to the plastid. The protein resides in the chloroplast. It catalyses the reaction 2 (2R)-3-phosphoglycerate + 2 H(+) = D-ribulose 1,5-bisphosphate + CO2 + H2O. The catalysed reaction is D-ribulose 1,5-bisphosphate + O2 = 2-phosphoglycolate + (2R)-3-phosphoglycerate + 2 H(+). In terms of biological role, ruBisCO catalyzes two reactions: the carboxylation of D-ribulose 1,5-bisphosphate, the primary event in carbon dioxide fixation, as well as the oxidative fragmentation of the pentose substrate in the photorespiration process. Both reactions occur simultaneously and in competition at the same active site. This is Ribulose bisphosphate carboxylase large chain (rbcL) from Magnolia latahensis (Apocynophyllum latahense).